Here is a 1470-residue protein sequence, read N- to C-terminus: Transient receptor potential cation channel subfamily M member 2 (1470 aa).

At 1–725 (MDEAALEPTL…GELSVDNPHW (725 aa)) the chain is on the cytoplasmic side. Residues Tyr267, Arg274, 305–308 (GPGT), and Arg330 contribute to the ADP-D-ribose site. The stretch at 726–738 (KVLLCMIFFPLIY) is an intramembrane region. At 739–808 (TGFLTFRRDE…MSFLKSPQVK (70 aa)) the chain is on the cytoplasmic side. A helical transmembrane segment spans residues 809-829 (FYWNIASYFGFLWLFAVVLMI). At 830-836 (DFQTSPS) the chain is on the extracellular side. The helical transmembrane segment at 837-857 (WRELLLYVWLTSLVCEEIRQL) threads the bilayer. 2 residues coordinate Ca(2+): Glu853 and Gln856. Residues 858 to 876 (YHDFDGSGFRRKAKMYIKD) lie on the Cytoplasmic side of the membrane. Residues 877-897 (LWNILDVLSIVLFIAGLICRL) traverse the membrane as a helical segment. Asn879 provides a ligand contact to Ca(2+). Over 898 to 905 (QASDTVFY) the chain is Extracellular. Residues 906–926 (IGKVILCIDFIIFCLRLMAIF) traverse the membrane as a helical segment. At 927 to 941 (SISRTLGPKIIIVRR) the chain is on the cytoplasmic side. A helical membrane pass occupies residues 942–968 (MMLDLFFFMFLLSIWVVAYGVAKQGIL). At 969–977 (IENEERLNW) the chain is on the extracellular side. The segment at residues 978-1002 (IIRGAVYEPYITIFGNFPTNIDNTL) is an intramembrane region (pore-forming). The Selectivity filter motif lies at 991 to 993 (FGN). Residues 1003-1034 (FDISSCSVNASDPLKPKCPMLNADNTPVFPEW) lie on the Extracellular side of the membrane. An intrachain disulfide couples Cys1008 to Cys1020. An N-linked (GlcNAc...) asparagine glycan is attached at Asn1011. A helical membrane pass occupies residues 1035–1059 (LTIMMLCVYLLFANILLLNLLIAIF). Residues 1060–1087 (NYTFQEVQDNTDTIWKFQRYELIKEYHS) are Cytoplasmic-facing. Glu1084 lines the Ca(2+) pocket. The stretch at 1088–1105 (RPALPPPFILLSHLILFI) is an intramembrane region. The Cytoplasmic portion of the chain corresponds to 1106–1470 (RGVFLRDLPQ…QIAHHHNTYF (365 aa)). The tract at residues 1157-1470 (HRIHDTAEKV…QIAHHHNTYF (314 aa)) is divergent Nudix hydrolase-like domain. 2 disordered regions span residues 1215–1256 (KSKV…LQYP) and 1281–1314 (PPVY…GKGA). Over residues 1231 to 1244 (DDGDSSGQETDDEE) the composition is skewed to acidic residues. Polar residues predominate over residues 1283 to 1295 (VYNQQDSSESDTS). ADP-D-ribose contacts are provided by Asp1398 and Arg1400.

The protein belongs to the transient receptor (TC 1.A.4) family. LTrpC subfamily. TRPM2 sub-subfamily. As to quaternary structure, homotetramer.

It is found in the cell membrane. It carries out the reaction Ca(2+)(in) = Ca(2+)(out). It catalyses the reaction Na(+)(in) = Na(+)(out). With respect to regulation, activated by intracellular ADP-ribose. Ca(2+) and PI(4,5)P2 are required for channel opening by ADP-ribose. In terms of biological role, nonselective, voltage-independent cation channel that mediates Ca(2+) influx, leading to increased cytoplasmic Ca(2+) levels. Functions as a ligand-gated ion channel, gated by intracellular adenosine diphosphate ribose (ADP-ribose), Ca(2+), warm temperature, and oxidative stress. Binding of ADP-ribose to the cytoplasmic N-terminal region causes a conformation change; the channel is primed but still requires Ca(2+) binding to trigger channel opening. The polypeptide is Transient receptor potential cation channel subfamily M member 2 (Danio rerio (Zebrafish)).